A 192-amino-acid chain; its full sequence is MIDDLIQKEFLAHKEALEKSLESLQEALKQSVHLLIETLENQGKILICGNGGSASDAQHFATELTGRYKLERKGLSAISLNTDTSALTAIANDYGYEEVFARQVEALGVKNDVLIGISTSGNSKNVLKAYEKAKDLGMKTLSLAGRDGGKMKPLSDMALIVPSDDTPRIQEMHILMIHILCDCIERHFAHKN.

One can recognise an SIS domain in the interval 35-192 (LIETLENQGK…CIERHFAHKN (158 aa)). Residue 50–52 (NGG) participates in substrate binding. Zn(2+) contacts are provided by His-59 and Glu-63. Residues Glu-63, 92–93 (ND), 118–120 (STS), Ser-123, and Gln-170 contribute to the substrate site. Residues Gln-170 and His-178 each contribute to the Zn(2+) site.

It belongs to the SIS family. GmhA subfamily. In terms of assembly, homotetramer. The cofactor is Zn(2+).

The protein localises to the cytoplasm. It carries out the reaction 2 D-sedoheptulose 7-phosphate = D-glycero-alpha-D-manno-heptose 7-phosphate + D-glycero-beta-D-manno-heptose 7-phosphate. The protein operates within carbohydrate biosynthesis; D-glycero-D-manno-heptose 7-phosphate biosynthesis; D-glycero-alpha-D-manno-heptose 7-phosphate and D-glycero-beta-D-manno-heptose 7-phosphate from sedoheptulose 7-phosphate: step 1/1. Catalyzes the isomerization of sedoheptulose 7-phosphate in D-glycero-D-manno-heptose 7-phosphate. The protein is Phosphoheptose isomerase of Helicobacter pylori (strain HPAG1).